The primary structure comprises 327 residues: GMP reductase (327 aa).

Cys176 functions as the Thioimidate intermediate in the catalytic mechanism. Ile205–Val228 contacts NADP(+).

Belongs to the IMPDH/GMPR family. GuaC type 2 subfamily.

The enzyme catalyses IMP + NH4(+) + NADP(+) = GMP + NADPH + 2 H(+). In terms of biological role, catalyzes the irreversible NADPH-dependent deamination of GMP to IMP. It functions in the conversion of nucleobase, nucleoside and nucleotide derivatives of G to A nucleotides, and in maintaining the intracellular balance of A and G nucleotides. The protein is GMP reductase of Helicobacter pylori (strain ATCC 700392 / 26695) (Campylobacter pylori).